Consider the following 346-residue polypeptide: MDYKTAGVDVTAGRAFVERIKSCVEKTHKSEVIGGLGGFGGCIRIPKGFESPVLVSGTDGVGTKLELAQQYGCHFGVGIDLVAMCVNDVITNGARPLFFLDYIASGTLTPDALAEVIEGIAAGCCQSDCSLLGGETAEMPGFYPIGRYDLAGFCVGIVENHHLIDGTKINCGDQIIGIKSNGVHSNGFSLVRKVLSMANVDENTLFGKDKRNLIQSLLEPTAIYVQLVEKLLRENLPIHGMTHITGGGLPENLPRIFPSGLSPHIDITTWEITEIFNWLQNAGDIPEIDLWNTFNMGIGFCLIVPKNEVNSALEICIKNDFEAWNIGQVVESQNNSKNIGIFGIPS.

The protein belongs to the AIR synthase family.

It localises to the cytoplasm. The enzyme catalyses 2-formamido-N(1)-(5-O-phospho-beta-D-ribosyl)acetamidine + ATP = 5-amino-1-(5-phospho-beta-D-ribosyl)imidazole + ADP + phosphate + H(+). The protein operates within purine metabolism; IMP biosynthesis via de novo pathway; 5-amino-1-(5-phospho-D-ribosyl)imidazole from N(2)-formyl-N(1)-(5-phospho-D-ribosyl)glycinamide: step 2/2. This Prochlorococcus marinus (strain NATL2A) protein is Phosphoribosylformylglycinamidine cyclo-ligase.